A 212-amino-acid chain; its full sequence is Ribonuclease HII (212 aa).

In terms of domain architecture, RNase H type-2 spans threonine 20–serine 209. Residues aspartate 26, glutamate 27, and aspartate 117 each coordinate a divalent metal cation.

It belongs to the RNase HII family. Requires Mn(2+) as cofactor. Mg(2+) serves as cofactor.

It is found in the cytoplasm. It carries out the reaction Endonucleolytic cleavage to 5'-phosphomonoester.. Endonuclease that specifically degrades the RNA of RNA-DNA hybrids. The protein is Ribonuclease HII of Cereibacter sphaeroides (strain ATCC 17023 / DSM 158 / JCM 6121 / CCUG 31486 / LMG 2827 / NBRC 12203 / NCIMB 8253 / ATH 2.4.1.) (Rhodobacter sphaeroides).